The primary structure comprises 311 residues: tRNA dimethylallyltransferase (311 aa).

16 to 23 (GPTASGKS) lines the ATP pocket. 18–23 (TASGKS) lines the substrate pocket. Residues 41–44 (DSMQ) are interaction with substrate tRNA.

The protein belongs to the IPP transferase family. Monomer. Mg(2+) is required as a cofactor.

It carries out the reaction adenosine(37) in tRNA + dimethylallyl diphosphate = N(6)-dimethylallyladenosine(37) in tRNA + diphosphate. In terms of biological role, catalyzes the transfer of a dimethylallyl group onto the adenine at position 37 in tRNAs that read codons beginning with uridine, leading to the formation of N6-(dimethylallyl)adenosine (i(6)A). The chain is tRNA dimethylallyltransferase from Geobacter sulfurreducens (strain ATCC 51573 / DSM 12127 / PCA).